Consider the following 409-residue polypeptide: Arginine deiminase (409 aa).

Cys399 (amidino-cysteine intermediate) is an active-site residue.

It belongs to the arginine deiminase family.

It localises to the cytoplasm. It catalyses the reaction L-arginine + H2O = L-citrulline + NH4(+). Its pathway is amino-acid degradation; L-arginine degradation via ADI pathway; carbamoyl phosphate from L-arginine: step 1/2. In Borrelia duttonii (strain Ly), this protein is Arginine deiminase.